Consider the following 380-residue polypeptide: Glucose-1-phosphate adenylyltransferase (380 aa).

Residues G164, 179 to 180, and S190 each bind alpha-D-glucose 1-phosphate; that span reads EK.

Belongs to the bacterial/plant glucose-1-phosphate adenylyltransferase family. As to quaternary structure, homotetramer.

It catalyses the reaction alpha-D-glucose 1-phosphate + ATP + H(+) = ADP-alpha-D-glucose + diphosphate. It functions in the pathway glycan biosynthesis; glycogen biosynthesis. Its function is as follows. Involved in the biosynthesis of ADP-glucose, a building block required for the elongation reactions to produce glycogen. Catalyzes the reaction between ATP and alpha-D-glucose 1-phosphate (G1P) to produce pyrophosphate and ADP-Glc. The protein is Glucose-1-phosphate adenylyltransferase of Lactococcus lactis subsp. lactis (strain IL1403) (Streptococcus lactis).